The sequence spans 319 residues: MVVLVDTVSSTPVRPRHPEKAARPDALSPKKPDWIRVRAPTTRGYGETRSIVKENGLVTVCEEAGCPNIGECWDKKHATFMIMGDTCTRACAFCNVKTGMPGALDPNEPAYVAEATRKLGLEHLVITSVDRDDLADGGAAHFAATIRAVREACPTTTIEILTPDFLRKDGALEVVVAAKPDVFNHNLETVPSRYLSVRPGARYFHSIRLLQRVKELDPTLFTKSGIMVGLGEERHEVLQVMDDLRSAEVDFLTIGQYLQPTRKHHAVMRYVTPDEFGGYAKTAYAKGFLMVSASPMTRSSHHAGDDFAKLRAARAALAR.

The segment at Met-1–Ser-28 is disordered. Positions Arg-16–Ser-28 are enriched in basic and acidic residues. The [4Fe-4S] cluster site is built by Cys-61, Cys-66, Cys-72, Cys-87, Cys-91, Cys-94, and Ser-300. The Radical SAM core domain occupies Trp-73–Leu-289.

Belongs to the radical SAM superfamily. Lipoyl synthase family. [4Fe-4S] cluster serves as cofactor.

The protein localises to the cytoplasm. It carries out the reaction [[Fe-S] cluster scaffold protein carrying a second [4Fe-4S](2+) cluster] + N(6)-octanoyl-L-lysyl-[protein] + 2 oxidized [2Fe-2S]-[ferredoxin] + 2 S-adenosyl-L-methionine + 4 H(+) = [[Fe-S] cluster scaffold protein] + N(6)-[(R)-dihydrolipoyl]-L-lysyl-[protein] + 4 Fe(3+) + 2 hydrogen sulfide + 2 5'-deoxyadenosine + 2 L-methionine + 2 reduced [2Fe-2S]-[ferredoxin]. It participates in protein modification; protein lipoylation via endogenous pathway; protein N(6)-(lipoyl)lysine from octanoyl-[acyl-carrier-protein]: step 2/2. Functionally, catalyzes the radical-mediated insertion of two sulfur atoms into the C-6 and C-8 positions of the octanoyl moiety bound to the lipoyl domains of lipoate-dependent enzymes, thereby converting the octanoylated domains into lipoylated derivatives. This Rhodopseudomonas palustris (strain HaA2) protein is Lipoyl synthase.